The chain runs to 82 residues: MVTIRLARHGAKKRPFYQIVVADSRNSATGRFIEKVGFFNPTATGQEEGLRLDLDRVNHWVSQGASLSDRVAQLVKTAQKAA.

It belongs to the bacterial ribosomal protein bS16 family.

The protein is Small ribosomal subunit protein bS16 of Vibrio cholerae serotype O1 (strain ATCC 39541 / Classical Ogawa 395 / O395).